The primary structure comprises 154 residues: Telokin (154 aa).

A disordered region spans residues 1–24 (ISGMSGRKASGSSPTSPINANKVE). Residues 10 to 19 (SGSSPTSPIN) are compositionally biased toward polar residues. Positions 42–133 (PYFTKTILDM…ATCTAELLVE (92 aa)) constitute an Ig-like C2-type domain. Residues 134 to 154 (TMGKEGEGEGEGEEDEEEEEE) are disordered. The span at 141–154 (GEGEGEEDEEEEEE) shows a compositional bias: acidic residues.

Belongs to the protein kinase superfamily. CAMK Ser/Thr protein kinase family. In terms of assembly, binds calmodulin.

Its function is as follows. Corresponds to the C-terminus of smooth muscle myosin light chain kinase. This chain is Telokin, found in Meleagris gallopavo (Wild turkey).